The primary structure comprises 416 residues: uncharacterized protein (416 aa).

Positions 63, 75, 78, and 152 each coordinate [4Fe-4S] cluster. The S-adenosyl-L-methionine site is built by glutamine 253, phenylalanine 280, glutamate 300, and aspartate 348. Catalysis depends on cysteine 374, which acts as the Nucleophile.

The protein belongs to the class I-like SAM-binding methyltransferase superfamily. RNA M5U methyltransferase family.

This is an uncharacterized protein from Agrobacterium fabrum (strain C58 / ATCC 33970) (Agrobacterium tumefaciens (strain C58)).